Consider the following 369-residue polypeptide: Protein-glutamate methylesterase/protein-glutamine glutaminase 1 (369 aa).

The 118-residue stretch at 3–120 (KVVVVDDSAF…SLDIVKIEKD (118 aa)) folds into the Response regulatory domain. Aspartate 54 bears the 4-aspartylphosphate mark. Residues 136–168 (RSFRPAPAVRPAAPAALRATPRPSAAPSSAASS) are compositionally biased toward low complexity. The disordered stretch occupies residues 136 to 174 (RSFRPAPAVRPAAPAALRATPRPSAAPSSAASSTGTLQV). Positions 177-369 (GKPVRDVVAI…AQAIMNAVYK (193 aa)) constitute a CheB-type methylesterase domain. Catalysis depends on residues serine 189, histidine 216, and aspartate 312.

It belongs to the CheB family. Phosphorylated by CheA. Phosphorylation of the N-terminal regulatory domain activates the methylesterase activity.

It localises to the cytoplasm. It catalyses the reaction [protein]-L-glutamate 5-O-methyl ester + H2O = L-glutamyl-[protein] + methanol + H(+). The catalysed reaction is L-glutaminyl-[protein] + H2O = L-glutamyl-[protein] + NH4(+). Its function is as follows. Involved in chemotaxis. Part of a chemotaxis signal transduction system that modulates chemotaxis in response to various stimuli. Catalyzes the demethylation of specific methylglutamate residues introduced into the chemoreceptors (methyl-accepting chemotaxis proteins or MCP) by CheR. Also mediates the irreversible deamidation of specific glutamine residues to glutamic acid. In Oleidesulfovibrio alaskensis (strain ATCC BAA-1058 / DSM 17464 / G20) (Desulfovibrio alaskensis), this protein is Protein-glutamate methylesterase/protein-glutamine glutaminase 1.